Here is a 432-residue protein sequence, read N- to C-terminus: Adenylosuccinate synthetase (432 aa).

GTP-binding positions include 13–19 (GDEGKGK) and 41–43 (GHT). The Proton acceptor role is filled by D14. Mg(2+) contacts are provided by D14 and G41. IMP-binding positions include 14–17 (DEGK), 39–42 (NAGH), T130, R144, Q225, T240, and R304. The active-site Proton donor is H42. Substrate is bound at residue 300–306 (ATTGRRR). Residues R306, 332 to 334 (KLD), and 415 to 417 (STG) each bind GTP.

Belongs to the adenylosuccinate synthetase family. Homodimer. It depends on Mg(2+) as a cofactor.

It is found in the cytoplasm. It carries out the reaction IMP + L-aspartate + GTP = N(6)-(1,2-dicarboxyethyl)-AMP + GDP + phosphate + 2 H(+). It participates in purine metabolism; AMP biosynthesis via de novo pathway; AMP from IMP: step 1/2. Plays an important role in the de novo pathway of purine nucleotide biosynthesis. Catalyzes the first committed step in the biosynthesis of AMP from IMP. The chain is Adenylosuccinate synthetase from Salmonella paratyphi A (strain AKU_12601).